Reading from the N-terminus, the 1062-residue chain is Protein P1-P2 (1062 aa).

The first 20 residues, 1 to 20 (MNRFTAYAALFFIFSLCSTA), serve as a signal peptide directing secretion. The next 3 membrane-spanning stretches (helical) occupy residues 121 to 141 (AASV…WTLA), 144 to 164 (ITLF…LGCI), and 172 to 192 (ALSL…KIIW). The Peptidase S39 domain occupies 207–399 (VEGYKGFSVP…GITSPNYVFE (193 aa)). Residues H255, D286, and S354 each act as for protease activity in the active site. The interval 456-557 (TNAPAEKTAQ…AEAQTKQTRK (102 aa)) is disordered. Polar residues predominate over residues 463 to 484 (TAQTNSAEKTAPSTSAEKTAPT). Basic residues predominate over residues 497 to 511 (QNKRQLRHPRRRYKR). Residues 541–553 (QGVSESPAEAQTK) show a composition bias toward polar residues. Residues 859–974 (EHTRPTDCSG…APNSDLEEYK (116 aa)) form the RdRp catalytic domain.

In terms of processing, specific enzymatic cleavages in vivo yield mature proteins. The protease probably cleaves itself and releases the RdRp (Potential). Cleavages have been shown in the P1 protein, but since the N-terminus containing the serine protease is shared between P1 and P1-P2, cleavages should also occur within the P1-P2 protein.

Its subcellular location is the membrane. It carries out the reaction RNA(n) + a ribonucleoside 5'-triphosphate = RNA(n+1) + diphosphate. Functionally, precursor from which the RNA-dependent RNA polymerase (RdRp) is probably released. RNA-dependent RNA polymerase plays an essential role in virus replication (Potential). The polypeptide is Protein P1-P2 (Solanum tuberosum (Potato)).